A 281-amino-acid chain; its full sequence is L-cysteine S-thiosulfotransferase subunit SoxA (281 aa).

An N-terminal signal peptide occupies residues 1 to 25 (MTKHGFLLATLVLAGATLPIGPVTA). Cysteine 99 and cysteine 130 form a disulfide bridge. The 107-residue stretch at 175 to 281 (AAYEQGKRFY…LELNGPGARK (107 aa)) folds into the Cytochrome c domain. Residues cysteine 195 and histidine 199 each coordinate heme. Residue arginine 238 coordinates substrate. Position 242 (cysteine 242) interacts with heme. Catalysis depends on cysteine 242, which acts as the Cysteine persulfide intermediate.

The protein belongs to the SoxA family. In terms of assembly, heterodimer of SoxA and SoxX. Requires heme as cofactor. Cysteine persulfide at Cys-242.

It localises to the periplasm. It carries out the reaction L-cysteinyl-[SoxY protein] + thiosulfate + 2 Fe(III)-[cytochrome c] = S-sulfosulfanyl-L-cysteinyl-[SoxY protein] + 2 Fe(II)-[cytochrome c] + 2 H(+). It catalyses the reaction S-sulfanyl-L-cysteinyl-[SoxY protein] + thiosulfate + 2 Fe(III)-[cytochrome c] = S-(2-sulfodisulfanyl)-L-cysteinyl-[SoxY protein] + 2 Fe(II)-[cytochrome c] + 2 H(+). In terms of biological role, C-type monoheme cytochrome, which is part of the SoxAX cytochrome complex involved in sulfur oxidation. The SoxAX complex catalyzes the formation of a heterodisulfide bond between the conserved cysteine residue on a sulfur carrier SoxYZ complex subunit SoxY and thiosulfate or other inorganic sulfur substrates. This leads to the intermediary formation of conspicuous sulfur globules inside of the cells. The protein is L-cysteine S-thiosulfotransferase subunit SoxA of Allochromatium vinosum (Chromatium vinosum).